Here is a 566-residue protein sequence, read N- to C-terminus: Arginine--tRNA ligase (566 aa).

The 'HIGH' region motif lies at 123–133; that stretch reads PNIAKPFHIGH.

The protein belongs to the class-I aminoacyl-tRNA synthetase family. Monomer.

It is found in the cytoplasm. It carries out the reaction tRNA(Arg) + L-arginine + ATP = L-arginyl-tRNA(Arg) + AMP + diphosphate. This is Arginine--tRNA ligase from Halothermothrix orenii (strain H 168 / OCM 544 / DSM 9562).